Consider the following 345-residue polypeptide: Probable dual-specificity RNA methyltransferase RlmN (345 aa).

The active-site Proton acceptor is glutamate 90. Residues 96-327 form the Radical SAM core domain; the sequence is QSYGNSVCVT…CIVRREFGHD (232 aa). Cysteine 103 and cysteine 332 are joined by a disulfide. [4Fe-4S] cluster is bound by residues cysteine 110, cysteine 114, and cysteine 117. Residues 160 to 161, serine 192, 215 to 217, and asparagine 291 contribute to the S-adenosyl-L-methionine site; these read GE and SLH. Cysteine 332 functions as the S-methylcysteine intermediate in the catalytic mechanism.

It belongs to the radical SAM superfamily. RlmN family. [4Fe-4S] cluster is required as a cofactor.

The protein resides in the cytoplasm. The enzyme catalyses adenosine(2503) in 23S rRNA + 2 reduced [2Fe-2S]-[ferredoxin] + 2 S-adenosyl-L-methionine = 2-methyladenosine(2503) in 23S rRNA + 5'-deoxyadenosine + L-methionine + 2 oxidized [2Fe-2S]-[ferredoxin] + S-adenosyl-L-homocysteine. The catalysed reaction is adenosine(37) in tRNA + 2 reduced [2Fe-2S]-[ferredoxin] + 2 S-adenosyl-L-methionine = 2-methyladenosine(37) in tRNA + 5'-deoxyadenosine + L-methionine + 2 oxidized [2Fe-2S]-[ferredoxin] + S-adenosyl-L-homocysteine. Functionally, specifically methylates position 2 of adenine 2503 in 23S rRNA and position 2 of adenine 37 in tRNAs. This Spiroplasma citri protein is Probable dual-specificity RNA methyltransferase RlmN.